The primary structure comprises 1372 residues: MGFGRGCETTAVPLLVAVAALLVGTAGHLYPGEVCPGMDIRNNLTRLHELENCSVIEGHLQILLMFKTRPEDFRDLSFPKLIMITDYLLLFRVYGLESLKDLFPNLTVIRGSRLFFNYALVIFEMVHLKELGLYNLMNITRGSVRIEKNNELCYLATIDWSRILDSVEDNYIVLNKDDNEECGDVCPGTAKGKTNCPATVINGQFVERCWTHSHCQKVCPTICKSHGCTAEGLCCHKECLGNCSEPDDPTKCVACRNFYLDGQCVETCPPPYYHFQDWRCVNFSFCQDLHFKCRNSRKPGCHQYVIHNNKCIPECPSGYTMNSSNLMCTPCLGPCPKVCQILEGEKTIDSVTSAQELRGCTVINGSLIINIRGGNNLAAELEANLGLIEEISGFLKIRRSYALVSLSFFRKLHLIRGETLEIGNYSFYALDNQNLRQLWDWSKHNLTITQGKLFFHYNPKLCLSEIHKMEEVSGTKGRQERNDIALKTNGDQASCENELLKFSFIRTSFDKILLRWEPYWPPDFRDLLGFMLFYKEAPYQNVTEFDGQDACGSNSWTVVDIDPPQRSNDPKSQTPSHPGWLMRGLKPWTQYAIFVKTLVTFSDERRTYGAKSDIIYVQTDATNPSVPLDPISVSNSSSQIILKWKPPSDPNGNITHYLVYWERQAEDSELFELDYCLKGLKLPSRTWSPPFESDDSQKHNQSEYDDSASECCSCPKTDSQILKELEESSFRKTFEDYLHNVVFVPRPSRKRRSLEEVGNVTATTLTLPDFPNVSSTIVPTSQEEHRPFEKVVNKESLVISGLRHFTGYRIELQACNQDSPDERCSVAAYVSARTMPEAKADDIVGPVTHEIFENNVVHLMWQEPKEPNGLIVLYEVSYRRYGDEELHLCVSRKHFALERGCRLRGLSPGNYSVRVRATSLAGNGSWTEPTYFYVTDYLDVPSNIAKIIIGPLIFVFLFSVVIGSIYLFLRKRQPDGPMGPLYASSNPEYLSASDVFPSSVYVPDEWEVPREKITLLRELGQGSFGMVYEGNAKDIIKGEAETRVAVKTVNESASLRERIEFLNEASVMKGFTCHHVVRLLGVVSKGQPTLVVMELMAHGDLKSHLRSLRPDAENNPGRPPPTLQEMIQMTAEIADGMAYLNAKKFVHRDLAARNCMVAHDFTVKIGDFGMTRDIYETDYYRKGGKGLLPVRWMSPESLKDGVFTASSDMWSFGVVLWEITSLAEQPYQGLSNEQVLKFVMDGGYLDPPDNCPERLTDLMRMCWQFNPKMRPTFLEIVNLLKDDLHPSFPEVSFFYSEENKAPESEELEMEFEDMENVPLDRSSHCQREEAGGREGGSSLSIKRTYDEHIPYTHMNGGKKNGRVLTLPRSNPS.

The signal sequence occupies residues 1–27 (MGFGRGCETTAVPLLVAVAALLVGTAG). Extracellular segments follow at residues 28–748 (HLYP…PRPS) and 753–946 (SLEE…NIAK). An intrachain disulfide couples Cys35 to Cys53. N-linked (GlcNAc...) asparagine glycosylation is found at Asn43, Asn52, Asn105, and Asn138. 9 disulfides stabilise this stretch: Cys153–Cys182, Cys186–Cys209, Cys196–Cys215, Cys219–Cys228, Cys223–Cys234, Cys235–Cys243, Cys239–Cys252, Cys255–Cys264, and Cys268–Cys280. An N-linked (GlcNAc...) asparagine glycan is attached at Asn242. Asn282 carries an N-linked (GlcNAc...) asparagine glycan. 5 cysteine pairs are disulfide-bonded: Cys286–Cys311, Cys293–Cys301, Cys315–Cys328, Cys331–Cys335, and Cys339–Cys360. N-linked (GlcNAc...) asparagine glycosylation occurs at Asn322. Residue Asn364 is glycosylated (N-linked (GlcNAc...) asparagine). Phosphoserine is present on Ser400. Tyr401 carries the phosphotyrosine modification. Ser407 is modified (phosphoserine). N-linked (GlcNAc...) asparagine glycosylation is found at Asn424 and Asn445. A disulfide bridge links Cys462 with Cys495. N-linked (GlcNAc...) asparagine glycans are attached at residues Asn541, Asn635, Asn653, and Asn700. A Fibronectin type-III 1 domain is found at 626–728 (VPLDPISVSN…SQILKELEES (103 aa)). Disulfide bonds link Cys676/Cys889 and Cys815/Cys824. The tract at residues 688 to 709 (SPPFESDDSQKHNQSEYDDSAS) is disordered. Residues 735 to 743 (EDYLHNVVF) form an insulin-binding region. 2 consecutive Fibronectin type-III domains span residues 744–838 (VPRP…MPEA) and 843–937 (IVGP…VTDY). N-linked (GlcNAc...) asparagine glycans are attached at residues Asn759 and Asn772. N-linked (GlcNAc...) asparagine glycans are attached at residues Asn910 and Asn923. A helical membrane pass occupies residues 947-967 (IIIGPLIFVFLFSVVIGSIYL). Topologically, residues 968–1372 (FLRKRQPDGP…VLTLPRSNPS (405 aa)) are cytoplasmic. The tract at residues 986–989 (NPEY) is important for interaction with IRS1, SHC1 and STAT5B. Tyr989 carries the post-translational modification Phosphotyrosine; by autocatalysis. Residues 1013–1288 (ITLLRELGQG…LLKDDLHPSF (276 aa)) form the Protein kinase domain. ATP is bound by residues Ser1023 and Lys1047. Residue Lys1069 forms a Glycyl lysine isopeptide (Lys-Gly) (interchain with G-Cter in ubiquitin) linkage. S-nitrosocysteine is present on Cys1073. 1094 to 1100 (ELMAHGD) provides a ligand contact to ATP. The active-site Proton donor/acceptor is the Asp1149. ATP-binding positions include 1153–1154 (RN) and Asp1167. A phosphotyrosine; by autocatalysis mark is found at Tyr1175, Tyr1179, Tyr1180, Tyr1345, and Tyr1351. The segment at 1349–1372 (IPYTHMNGGKKNGRVLTLPRSNPS) is disordered. Residues 1351–1354 (YTHM) form a PIK3R1 binding region.

Belongs to the protein kinase superfamily. Tyr protein kinase family. Insulin receptor subfamily. As to quaternary structure, tetramer of 2 alpha and 2 beta chains linked by disulfide bonds. The alpha chains carry the insulin-binding regions, while the beta chains carry the kinase domain. Forms a hybrid receptor with IGF1R, the hybrid is a tetramer consisting of 1 alpha chain and 1 beta chain of INSR and 1 alpha chain and 1 beta chain of IGF1R. Interacts with SORBS1 but dissociates from it following insulin stimulation. Binds SH2B2. Activated form of INSR interacts (via Tyr-989) with the PTB/PID domains of IRS1 and SHC1. The sequences surrounding the phosphorylated NPXY motif contribute differentially to either IRS1 or SHC1 recognition. Interacts (via tyrosines in the C-terminus) with IRS2 (via PTB domain and 591-786 AA); the 591-786 would be the primary anchor of IRS2 to INSR while the PTB domain would have a stabilizing action on the interaction with INSR. Interacts with the SH2 domains of the 85 kDa regulatory subunit of PI3K (PIK3R1) in vitro, when autophosphorylated on tyrosine residues. Interacts with SOCS7. Interacts (via the phosphorylated Tyr-989), with SOCS3. Interacts (via the phosphorylated Tyr-1175, Tyr-1179, Tyr-1180) with SOCS1. Interacts with CAV2 (tyrosine-phosphorylated form); the interaction is increased with 'Tyr-27'phosphorylation of CAV2. Interacts with ARRB2. Interacts with GRB10; this interaction blocks the association between IRS1/IRS2 and INSR, significantly reduces insulin-stimulated tyrosine phosphorylation of IRS1 and IRS2 and thus decreases insulin signaling. Interacts with GRB7. Interacts with PDPK1. Interacts (via Tyr-1180) with GRB14 (via BPS domain); this interaction protects the tyrosines in the activation loop from dephosphorylation, but promotes dephosphorylation of Tyr-989, this results in decreased interaction with, and phosphorylation of, IRS1. Interacts (via subunit alpha) with ENPP1 (via 485-599 AA); this interaction blocks autophosphorylation. Interacts with PTPRE; this interaction is dependent of Tyr-1175, Tyr-1179 and Tyr-1180 of the INSR. Interacts with STAT5B (via SH2 domain). Interacts with PTPRF. Interacts with the insulin receptor SORL1; this interaction strongly increases its surface exposure, hence strengthens insulin signal reception. Interacts (tyrosine phosphorylated) with CCDC88A/GIV (via SH2-like region); binding requires autophosphorylation of the INSR C-terminal region. Interacts with GNAI3; the interaction is probably mediated by CCDC88A/GIV. Interacts with LMBRD1. Interacts (in response to insulin stimulation) with NCK1; this interaction may recruit PTPN1 to mediate INSR dephosphorylation. Interacts with CD248; this interaction diminishes INSR autophosphorylation. In terms of processing, after being transported from the endoplasmic reticulum to the Golgi apparatus, the single glycosylated precursor is further glycosylated and then cleaved, followed by its transport to the plasma membrane. Post-translationally, autophosphorylated on tyrosine residues in response to insulin. Phosphorylation of Tyr-989 is required for IRS1-, SHC1-, and STAT5B-binding. Dephosphorylated by PTPRE on Tyr-989, Tyr-1175, Tyr-1179 and Tyr-1180 residues. May also be phosphorylated at Tyr-1175 and Tyr-1180 by mTORC2. Dephosphorylated by PTPRF and PTPN1. Dephosphorylated by PTPN2 and Ptprv; down-regulates insulin-induced signaling. S-nitrosylation at Cys-1073 by BLVRB inhibits the receptor tyrosine kinase, thereby inhibiting insulin signaling. In terms of processing, ubiquitinated by MARCHF1; leading to degradation thereby reducing surface INSR expression.

The protein localises to the cell membrane. It localises to the recycling endosome membrane. The protein resides in the late endosome. It is found in the lysosome. The enzyme catalyses L-tyrosyl-[protein] + ATP = O-phospho-L-tyrosyl-[protein] + ADP + H(+). Activated in response to insulin. Autophosphorylation activates the kinase activity. PTPN1, PTPRE and PTPRF dephosphorylate important tyrosine residues, thereby reducing INSR activity. Inhibited by ENPP1. GRB10 and GRB14 inhibit the catalytic activity of the INSR, they block access of substrates to the activated receptor. SOCS1 and SOCS3 act as negative regulators of INSR activity, they bind to the activated INRS and interfere with the phosphorylation of INSR substrates. Interacts with PTPRF. Interacts with ATIC; ATIC together with PRKAA2/AMPK2 and HACD3/PTPLAD1 is proposed to be part of a signaling netwok regulating INSR autophosphorylation and endocytosis. Its function is as follows. Receptor tyrosine kinase which mediates the pleiotropic actions of insulin. Binding of insulin leads to phosphorylation of several intracellular substrates, including, insulin receptor substrates (IRS1, 2, 3, 4), SHC, GAB1, CBL and other signaling intermediates. Each of these phosphorylated proteins serve as docking proteins for other signaling proteins that contain Src-homology-2 domains (SH2 domain) that specifically recognize different phosphotyrosine residues, including the p85 regulatory subunit of PI3K and SHP2. Phosphorylation of IRSs proteins lead to the activation of two main signaling pathways: the PI3K-AKT/PKB pathway, which is responsible for most of the metabolic actions of insulin, and the Ras-MAPK pathway, which regulates expression of some genes and cooperates with the PI3K pathway to control cell growth and differentiation. Binding of the SH2 domains of PI3K to phosphotyrosines on IRS1 leads to the activation of PI3K and the generation of phosphatidylinositol-(3, 4, 5)-triphosphate (PIP3), a lipid second messenger, which activates several PIP3-dependent serine/threonine kinases, such as PDPK1 and subsequently AKT/PKB. The net effect of this pathway is to produce a translocation of the glucose transporter SLC2A4/GLUT4 from cytoplasmic vesicles to the cell membrane to facilitate glucose transport. Moreover, upon insulin stimulation, activated AKT/PKB is responsible for: anti-apoptotic effect of insulin by inducing phosphorylation of BAD; regulates the expression of gluconeogenic and lipogenic enzymes by controlling the activity of the winged helix or forkhead (FOX) class of transcription factors. Another pathway regulated by PI3K-AKT/PKB activation is mTORC1 signaling pathway which regulates cell growth and metabolism and integrates signals from insulin. AKT mediates insulin-stimulated protein synthesis by phosphorylating TSC2 thereby activating mTORC1 pathway. The Ras/RAF/MAP2K/MAPK pathway is mainly involved in mediating cell growth, survival and cellular differentiation of insulin. Phosphorylated IRS1 recruits GRB2/SOS complex, which triggers the activation of the Ras/RAF/MAP2K/MAPK pathway. In addition to binding insulin, the insulin receptor can bind insulin-like growth factors (IGFI and IGFII). When present in a hybrid receptor with IGF1R, binds IGF1. In adipocytes, inhibits lipolysis. This Mus musculus (Mouse) protein is Insulin receptor (Insr).